The sequence spans 134 residues: Small ribosomal subunit protein uS9 (134 aa).

The interval 97–134 (ENRQDLKSCGFLTRDPRKKERKKYGHKKARKSFQFSKR) is disordered. A compositionally biased stretch (basic residues) spans 115–134 (KERKKYGHKKARKSFQFSKR).

The protein belongs to the universal ribosomal protein uS9 family.

This Chlamydia pneumoniae (Chlamydophila pneumoniae) protein is Small ribosomal subunit protein uS9 (rpsI).